Here is a 498-residue protein sequence, read N- to C-terminus: Glycerol kinase (498 aa).

Threonine 11 is a binding site for ADP. ATP is bound by residues threonine 11, serine 12, and serine 13. A sn-glycerol 3-phosphate-binding site is contributed by threonine 11. Residue arginine 15 participates in ADP binding. Residues arginine 81, glutamate 82, tyrosine 133, and aspartate 242 each contribute to the sn-glycerol 3-phosphate site. Glycerol-binding residues include arginine 81, glutamate 82, tyrosine 133, aspartate 242, and glutamine 243. Threonine 264 and glycine 307 together coordinate ADP. Residues threonine 264, glycine 307, glutamine 311, and glycine 408 each contribute to the ATP site. ADP contacts are provided by glycine 408 and asparagine 412.

Belongs to the FGGY kinase family.

The enzyme catalyses glycerol + ATP = sn-glycerol 3-phosphate + ADP + H(+). The protein operates within polyol metabolism; glycerol degradation via glycerol kinase pathway; sn-glycerol 3-phosphate from glycerol: step 1/1. Its activity is regulated as follows. Inhibited by fructose 1,6-bisphosphate (FBP). Functionally, key enzyme in the regulation of glycerol uptake and metabolism. Catalyzes the phosphorylation of glycerol to yield sn-glycerol 3-phosphate. The protein is Glycerol kinase of Ralstonia nicotianae (strain ATCC BAA-1114 / GMI1000) (Ralstonia solanacearum).